A 203-amino-acid polypeptide reads, in one-letter code: Probable GTP-binding protein EngB (203 aa).

Residues 22 to 195 form the EngB-type G domain; sequence GIPEIALAGR…WEEIVNQYNQ (174 aa). Residues 30–37, 57–61, 75–78, 142–145, and 174–176 contribute to the GTP site; these read GRSNVGKS, GKTRT, DLPG, TKAD, and VSS. Mg(2+)-binding residues include Ser37 and Thr59.

Belongs to the TRAFAC class TrmE-Era-EngA-EngB-Septin-like GTPase superfamily. EngB GTPase family. The cofactor is Mg(2+).

Functionally, necessary for normal cell division and for the maintenance of normal septation. In Clostridioides difficile (strain 630) (Peptoclostridium difficile), this protein is Probable GTP-binding protein EngB.